The chain runs to 605 residues: MKTEAQSYWGGIIKSMGLVFGDIGTSPIYTLTVIMTLTKPDAEHVLGILSLIVWTLIILVTVEYAWLAMSLGRKGEGGTIVLKEILIRLLKSGRQMAFAGFLAFLGVSLLLGDGVITPAISILSAVEGMRLIPGLEDLAQGGLILVAAVIAVFLFIFQFKGTDKVASAFGPIMVVWFSALTVSGLVSIIGTPTVVQAISPHHAVLFLKHNGLAGFFVLSEVILCATGGEALYADMGHLGRKPIIRAWYFVFCALVINYLGQGAFILRNPEAKNILFSMVKSQVPMLYIPFLLLTISATIIASQALISGVFSIVYQGITTRILPLMKVDYTSTHLKSQIYIGSVNWSLLVAVIFIMILFQRSENLAAAYGLAVTGTMFITGIMMTMIFSRTTKKWKVPIALAVTVIDFAYLTANLHKLPHGGYWSLVLASIPLAIMVIWTRGQRALYRSLKPLDLDTFLLSYEQIYAKGHNIPGTGLFFVRETPVVPPYVIHCIIRSNIIYERNVFVSLTRTDEPFDVRTKLTRGIGTGLDAFEVNAGYMERLDIEKLLKKHGVEEKVIFYGIEDIDTSNPVWRIFATIKRQSANFVQFNKLPVSKLQGVVTRVEM.

Transmembrane regions (helical) follow at residues 17 to 37 (GLVF…IMTL), 45 to 65 (VLGI…VEYA), 96 to 116 (MAFA…DGVI), 139 to 159 (AQGG…IFQF), 169 to 189 (FGPI…VSII), 211 to 231 (GLAG…GEAL), 246 to 266 (AWYF…AFIL), 286 to 306 (LYIP…QALI), 338 to 358 (IYIG…MILF), 367 to 387 (AYGL…TMIF), 394 to 414 (WKVP…TANL), and 417 to 437 (LPHG…IMVI).

This sequence belongs to the HAK/KUP transporter (TC 2.A.72) family.

It localises to the cell inner membrane. The enzyme catalyses K(+)(in) + H(+)(in) = K(+)(out) + H(+)(out). Functionally, transport of potassium into the cell. Likely operates as a K(+):H(+) symporter. The sequence is that of Probable potassium transport system protein Kup 2 from Geobacter sulfurreducens (strain ATCC 51573 / DSM 12127 / PCA).